Consider the following 65-residue polypeptide: Probable movement protein p8 (65 aa).

Polar residues predominate over residues 1-10 (MENTENVRSG). The disordered stretch occupies residues 1–47 (MENTENVRSGRNQREYSKERQQEGGYKEVSKAAVRKEGDVKQDMGPS). The span at 12-42 (NQREYSKERQQEGGYKEVSKAAVRKEGDVKQ) shows a compositional bias: basic and acidic residues.

Belongs to the carmovirus/necrovirus/panicovirus movement protein p8 family.

In terms of biological role, cell-to-cell movement. The sequence is that of Probable movement protein p8 from Tobacco necrosis virus (strain D) (TNV-D).